A 318-amino-acid polypeptide reads, in one-letter code: Olfactory receptor-like protein COR1 (318 aa).

At 1–26 (MASGNCTTPTTFILSGLTDNPGLQMP) the chain is on the extracellular side. An N-linked (GlcNAc...) asparagine glycan is attached at Asn5. The chain crosses the membrane as a helical span at residues 27 to 49 (LFMVFLAIYTITLLTNLGLIALI). Residues 50-57 (SVDLHLQT) are Cytoplasmic-facing. Residues 58 to 79 (PMYIFLQNLSFTDAAYSTVITP) traverse the membrane as a helical segment. Over 80–100 (KMLATFLEERKTISYVGCILQ) the chain is Extracellular. A disulfide bond links Cys97 and Cys179. Residues 101-120 (YFSFVLLTVTESLLLAVMAY) traverse the membrane as a helical segment. Over 121–139 (DRYVAICKPLLYPSIMTKA) the chain is Cytoplasmic. A helical membrane pass occupies residues 140-164 (VCWRLVESLYFLAFLNSLVHTSGLL). The Extracellular portion of the chain corresponds to 165–205 (KLSFCYSNVVNHFFCDISPLFQISSSSIAISELLVIISGSL). A helical membrane pass occupies residues 206-226 (FVMSSIIIILISYVFIILTVV). Over 227–239 (MIRSKDGKYKAFS) the chain is Cytoplasmic. The chain crosses the membrane as a helical span at residues 240 to 260 (TCTSHLMAVSLFHGTVIFMYL). At 261–271 (RPVKLFSLDTD) the chain is on the extracellular side. Residues 272–292 (KIASLFYTVVIPMLNPLIYSW) traverse the membrane as a helical segment. Residues 293–318 (RNKEVKDALRRLTATTFGFIDSKAVQ) are Cytoplasmic-facing.

It belongs to the G-protein coupled receptor 1 family.

Its subcellular location is the cell membrane. Functionally, odorant receptor. In Gallus gallus (Chicken), this protein is Olfactory receptor-like protein COR1 (COR1).